Here is a 405-residue protein sequence, read N- to C-terminus: Solute carrier family 35 member E2A (405 aa).

The segment at 1–22 is disordered; it reads MSAAAKSQVPEEAAPGCEEEPK. The next 10 membrane-spanning stretches (helical) occupy residues 76–96, 106–126, 142–162, 167–187, 195–215, 219–241, 264–284, 296–316, 326–346, and 347–367; these read LIYL…NKYI, MLGA…IFVP, FIMT…LGLV, VAVS…VIMS, TGLL…LCTA, SFNI…QNVF, AAAV…PVIG, IVLL…TAYA, FSVA…IVFG, and NKIT…VLLY. The tract at residues 380–405 is disordered; it reads SLVTATSRNPEDDTEPLVPQDSRQHH.

It belongs to the TPT transporter family. SLC35E subfamily.

The protein resides in the membrane. Putative transporter. This Mus musculus (Mouse) protein is Solute carrier family 35 member E2A (Slc35e2a).